A 269-amino-acid chain; its full sequence is Putative 6-phosphogluconolactonase (269 aa).

The tract at residues 248–269 (DAATGVPDRDSSDSDSPPPFDG) is disordered.

This sequence belongs to the glucosamine/galactosamine-6-phosphate isomerase family. 6-phosphogluconolactonase subfamily.

Its subcellular location is the nucleus. The catalysed reaction is 6-phospho-D-glucono-1,5-lactone + H2O = 6-phospho-D-gluconate + H(+). Its pathway is carbohydrate degradation; pentose phosphate pathway; D-ribulose 5-phosphate from D-glucose 6-phosphate (oxidative stage): step 2/3. Hydrolysis of 6-phosphogluconolactone to 6-phosphogluconate. The sequence is that of Putative 6-phosphogluconolactonase from Caenorhabditis elegans.